The sequence spans 361 residues: Peptide chain release factor 1 (361 aa).

An N5-methylglutamine modification is found at Gln235.

The protein belongs to the prokaryotic/mitochondrial release factor family. Post-translationally, methylated by PrmC. Methylation increases the termination efficiency of RF1.

It is found in the cytoplasm. Its function is as follows. Peptide chain release factor 1 directs the termination of translation in response to the peptide chain termination codons UAG and UAA. This Chlamydia felis (strain Fe/C-56) (Chlamydophila felis) protein is Peptide chain release factor 1.